The chain runs to 237 residues: Ubiquinone biosynthesis O-methyltransferase (237 aa).

4 residues coordinate S-adenosyl-L-methionine: Arg-38, Gly-58, Asp-79, and Met-124.

Belongs to the methyltransferase superfamily. UbiG/COQ3 family.

It catalyses the reaction a 3-demethylubiquinol + S-adenosyl-L-methionine = a ubiquinol + S-adenosyl-L-homocysteine + H(+). The catalysed reaction is a 3-(all-trans-polyprenyl)benzene-1,2-diol + S-adenosyl-L-methionine = a 2-methoxy-6-(all-trans-polyprenyl)phenol + S-adenosyl-L-homocysteine + H(+). It participates in cofactor biosynthesis; ubiquinone biosynthesis. Functionally, O-methyltransferase that catalyzes the 2 O-methylation steps in the ubiquinone biosynthetic pathway. This is Ubiquinone biosynthesis O-methyltransferase from Acinetobacter baumannii (strain AB307-0294).